We begin with the raw amino-acid sequence, 120 residues long: NAD(P)H-quinone oxidoreductase subunit 3, chloroplastic (120 aa).

3 consecutive transmembrane segments (helical) span residues L10–I30, M64–I84, and L89–V109.

It belongs to the complex I subunit 3 family. NDH is composed of at least 16 different subunits, 5 of which are encoded in the nucleus.

Its subcellular location is the plastid. The protein resides in the chloroplast thylakoid membrane. It catalyses the reaction a plastoquinone + NADH + (n+1) H(+)(in) = a plastoquinol + NAD(+) + n H(+)(out). The catalysed reaction is a plastoquinone + NADPH + (n+1) H(+)(in) = a plastoquinol + NADP(+) + n H(+)(out). NDH shuttles electrons from NAD(P)H:plastoquinone, via FMN and iron-sulfur (Fe-S) centers, to quinones in the photosynthetic chain and possibly in a chloroplast respiratory chain. The immediate electron acceptor for the enzyme in this species is believed to be plastoquinone. Couples the redox reaction to proton translocation, and thus conserves the redox energy in a proton gradient. The chain is NAD(P)H-quinone oxidoreductase subunit 3, chloroplastic from Chara vulgaris (Common stonewort).